The primary structure comprises 287 residues: MATLIDNRYGKARVRVLRVFKGPNEYHKVFDFDCRVLLRGAEFSETYLTGDNSKVVATDTMKNTVYVIAQKEEFKSLEEYGILLGKHFLATYSWVNGVEVVMRENQWRRIKTSNGKEQAHSFQRDREIHSVTVTSSRDKSPVVVSGIDDLLIMKTTQSGFEGFHRDKYTSLKETKDRVFATVVTANWTYNTLSVDYSKVFEQFKLSVFDIFAQTYSRSVQETLFLIAKDVISKVPQVEQVHLSLPNKHAFGFDFSRLNIENNQTVFQPVEEPSGLIEGTIKRSHSRL.

Active-site charge relay system residues include Lys-11 and Thr-58. Thr-58, Asp-59, Phe-160, Arg-177, Val-219, Gln-220, and Asn-246 together coordinate urate. Residue His-248 is the Charge relay system of the active site. The short motif at 285-287 (SRL) is the Microbody targeting signal element.

It belongs to the uricase family.

The protein resides in the peroxisome. The enzyme catalyses urate + O2 + H2O = 5-hydroxyisourate + H2O2. Its pathway is purine metabolism; urate degradation; (S)-allantoin from urate: step 1/3. Functionally, catalyzes the oxidation of uric acid to 5-hydroxyisourate, which is further processed to form (S)-allantoin. The sequence is that of Uricase (uox) from Dictyostelium discoideum (Social amoeba).